Here is a 499-residue protein sequence, read N- to C-terminus: Chitinase B (499 aa).

The first 41 residues, 1–41 (MSTRKAVIGYYFIPTNQINNYTETDTSVVPFPVSNITPAKA), serve as a signal peptide directing secretion. The 384-residue stretch at 42 to 425 (KQLTHINFSF…AALDRYFNAA (384 aa)) folds into the GH18 domain. Residues 68–69 (DA) and 95–98 (GGWY) each bind chitin. Glu144 functions as the Proton donor in the catalytic mechanism. Chitin is bound by residues Tyr145, 212–215 (MTYD), and Trp403. The Chitin-binding type-3 domain occupies 438 to 498 (LRYTGVGPGN…DSAWLKVGRL (61 aa)).

The protein belongs to the glycosyl hydrolase 18 family. Chitinase class II subfamily.

It carries out the reaction Random endo-hydrolysis of N-acetyl-beta-D-glucosaminide (1-&gt;4)-beta-linkages in chitin and chitodextrins.. The protein is Chitinase B (chiB) of Serratia marcescens.